The chain runs to 121 residues: Large ribosomal subunit protein uL14 (121 aa).

It belongs to the universal ribosomal protein uL14 family. Part of the 50S ribosomal subunit. Forms a cluster with proteins L3 and L19. In the 70S ribosome, L14 and L19 interact and together make contacts with the 16S rRNA in bridges B5 and B8.

Functionally, binds to 23S rRNA. Forms part of two intersubunit bridges in the 70S ribosome. The chain is Large ribosomal subunit protein uL14 from Mycoplasmopsis synoviae (strain 53) (Mycoplasma synoviae).